Consider the following 298-residue polypeptide: Lipoyl synthase (298 aa).

Residues Cys-40, Cys-45, Cys-51, Cys-67, Cys-71, Cys-74, and Ser-280 each coordinate [4Fe-4S] cluster. A Radical SAM core domain is found at 53 to 269; that stretch reads AVRKTATFMI…KEIALSKGFS (217 aa).

It belongs to the radical SAM superfamily. Lipoyl synthase family. [4Fe-4S] cluster is required as a cofactor.

The protein localises to the cytoplasm. It carries out the reaction [[Fe-S] cluster scaffold protein carrying a second [4Fe-4S](2+) cluster] + N(6)-octanoyl-L-lysyl-[protein] + 2 oxidized [2Fe-2S]-[ferredoxin] + 2 S-adenosyl-L-methionine + 4 H(+) = [[Fe-S] cluster scaffold protein] + N(6)-[(R)-dihydrolipoyl]-L-lysyl-[protein] + 4 Fe(3+) + 2 hydrogen sulfide + 2 5'-deoxyadenosine + 2 L-methionine + 2 reduced [2Fe-2S]-[ferredoxin]. Its pathway is protein modification; protein lipoylation via endogenous pathway; protein N(6)-(lipoyl)lysine from octanoyl-[acyl-carrier-protein]. In terms of biological role, catalyzes the radical-mediated insertion of two sulfur atoms into the C-6 and C-8 positions of the octanoyl moiety bound to the lipoyl domains of lipoate-dependent enzymes, thereby converting the octanoylated domains into lipoylated derivatives. In Bacillus cytotoxicus (strain DSM 22905 / CIP 110041 / 391-98 / NVH 391-98), this protein is Lipoyl synthase.